A 272-amino-acid chain; its full sequence is Nitrogenase iron protein (272 aa).

8-15 (GKGGIGKS) serves as a coordination point for ATP. C94 provides a ligand contact to [4Fe-4S] cluster. Position 97 is an ADP-ribosylarginine; by dinitrogenase reductase ADP-ribosyltransferase (R97). C129 provides a ligand contact to [4Fe-4S] cluster.

It belongs to the NifH/BchL/ChlL family. In terms of assembly, homodimer. It depends on [4Fe-4S] cluster as a cofactor. Post-translationally, the reversible ADP-ribosylation of Arg-97 inactivates the nitrogenase reductase and regulates nitrogenase activity.

The enzyme catalyses N2 + 8 reduced [2Fe-2S]-[ferredoxin] + 16 ATP + 16 H2O = H2 + 8 oxidized [2Fe-2S]-[ferredoxin] + 2 NH4(+) + 16 ADP + 16 phosphate + 6 H(+). The key enzymatic reactions in nitrogen fixation are catalyzed by the nitrogenase complex, which has 2 components: the iron protein and the molybdenum-iron protein. The polypeptide is Nitrogenase iron protein (Alkaliphilus metalliredigens (strain QYMF)).